The sequence spans 162 residues: Putative 4-hydroxy-4-methyl-2-oxoglutarate aldolase (162 aa).

Residues 75-78 and Arg97 contribute to the substrate site; that span reads GDML. Asp98 provides a ligand contact to a divalent metal cation.

Belongs to the class II aldolase/RraA-like family. Homotrimer. It depends on a divalent metal cation as a cofactor.

It catalyses the reaction 4-hydroxy-4-methyl-2-oxoglutarate = 2 pyruvate. It carries out the reaction oxaloacetate + H(+) = pyruvate + CO2. Its function is as follows. Catalyzes the aldol cleavage of 4-hydroxy-4-methyl-2-oxoglutarate (HMG) into 2 molecules of pyruvate. Also contains a secondary oxaloacetate (OAA) decarboxylase activity due to the common pyruvate enolate transition state formed following C-C bond cleavage in the retro-aldol and decarboxylation reactions. The polypeptide is Putative 4-hydroxy-4-methyl-2-oxoglutarate aldolase (Pseudomonas syringae pv. tomato (strain ATCC BAA-871 / DC3000)).